A 1480-amino-acid polypeptide reads, in one-letter code: ABC transporter G family member 49 (1480 aa).

Positions 1–18 (MHTTTQATPQKSMVMTTT) are enriched in polar residues. Disordered regions lie at residues 1–42 (MHTT…AGSS), 60–81 (VSGE…EDDE), and 104–124 (SSTR…GGAA). Composition is skewed to gly residues over residues 63–73 (ELGGGGGGGGG) and 107–123 (RGGG…GGGA). Residues 212 to 485 (LAAKLGFSHH…FESCGFKCPE (274 aa)) enclose the ABC transporter 1 domain. 245 to 252 (GPPGCGKT) serves as a coordination point for ATP. Positions 563 to 775 (HLLKACFDRE…AEIGLTGNEF (213 aa)) constitute an ABC transmembrane type-2 1 domain. Transmembrane regions (helical) follow at residues 581–601 (FLHI…GTVF), 619–639 (SLFY…VMSI), 656–676 (GWAY…VAAL), 699–719 (LLVL…VGSY), 725–745 (VGPI…GFLI), and 811–831 (VAAL…GLTI). The ABC transporter 2 domain maps to 877 to 1129 (ISFQDVNYYV…KVIQYFQSIP (253 aa)). Residue 922 to 929 (GVTGAGKT) coordinates ATP. In terms of domain architecture, ABC transmembrane type-2 2 spans 1202 to 1418 (EQFKACLWKQ…TLNLLFTTQF (217 aa)). 7 helical membrane-spanning segments follow: residues 1226–1246 (IVFM…QGNI), 1254–1274 (GLFT…INNS), 1311–1331 (IPYV…TIGY), 1340–1360 (WFFY…MLIV), 1368–1388 (VASI…GFVM), 1396–1416 (WWIW…LFTT), and 1449–1469 (LLPL…ILYG).

It belongs to the ABC transporter superfamily. ABCG family. PDR (TC 3.A.1.205) subfamily.

The protein resides in the membrane. Its function is as follows. May be a general defense protein. The sequence is that of ABC transporter G family member 49 from Oryza sativa subsp. japonica (Rice).